The sequence spans 701 residues: Polyribonucleotide nucleotidyltransferase (701 aa).

The Mg(2+) site is built by aspartate 487 and aspartate 493. The KH domain maps to 554–613; the sequence is PTMIAMKIDTDKIRDVIGKGGATIRAICEETKASIDIEDDGSIKIFGETKEAAEAAKQRI. The region spanning 623-691 is the S1 motif domain; the sequence is GKIYVGKVER…NRGRIKLSIK (69 aa).

Belongs to the polyribonucleotide nucleotidyltransferase family. Component of the RNA degradosome, which is a multiprotein complex involved in RNA processing and mRNA degradation. Mg(2+) serves as cofactor.

Its subcellular location is the cytoplasm. It catalyses the reaction RNA(n+1) + phosphate = RNA(n) + a ribonucleoside 5'-diphosphate. Involved in mRNA degradation. Catalyzes the phosphorolysis of single-stranded polyribonucleotides processively in the 3'- to 5'-direction. This chain is Polyribonucleotide nucleotidyltransferase, found in Pseudomonas putida (strain GB-1).